Consider the following 280-residue polypeptide: Bifunctional protein FolD (280 aa).

Residues 164 to 166 (GRS), serine 189, and valine 230 contribute to the NADP(+) site.

It belongs to the tetrahydrofolate dehydrogenase/cyclohydrolase family. As to quaternary structure, homodimer.

It carries out the reaction (6R)-5,10-methylene-5,6,7,8-tetrahydrofolate + NADP(+) = (6R)-5,10-methenyltetrahydrofolate + NADPH. The catalysed reaction is (6R)-5,10-methenyltetrahydrofolate + H2O = (6R)-10-formyltetrahydrofolate + H(+). The protein operates within one-carbon metabolism; tetrahydrofolate interconversion. In terms of biological role, catalyzes the oxidation of 5,10-methylenetetrahydrofolate to 5,10-methenyltetrahydrofolate and then the hydrolysis of 5,10-methenyltetrahydrofolate to 10-formyltetrahydrofolate. The sequence is that of Bifunctional protein FolD from Geotalea daltonii (strain DSM 22248 / JCM 15807 / FRC-32) (Geobacter daltonii).